The primary structure comprises 282 residues: Undecaprenyl-diphosphatase (282 aa).

7 helical membrane passes run 6–26 (LYFVKAFFLGIIEGLTEFIPV), 45–65 (SGKVFEVVIQLGAILAVMWIF), 85–105 (LFTRNLLLAFFPAAIIGAIFI), 112–132 (FYHPGVVAVTLVLGGLIMLWV), 200–220 (ATEFSFFLAMPTMLGAAVYDM), 230–250 (HDLGAIAVGFVAAFLSALLVV), and 262–282 (YRGFAWYRIALGVVVAAWLAF).

This sequence belongs to the UppP family.

The protein localises to the cell inner membrane. The enzyme catalyses di-trans,octa-cis-undecaprenyl diphosphate + H2O = di-trans,octa-cis-undecaprenyl phosphate + phosphate + H(+). Its function is as follows. Catalyzes the dephosphorylation of undecaprenyl diphosphate (UPP). Confers resistance to bacitracin. In Bordetella avium (strain 197N), this protein is Undecaprenyl-diphosphatase.